Consider the following 385-residue polypeptide: tRNA (guanine(26)-N(2))-dimethyltransferase (385 aa).

The Trm1 methyltransferase domain occupies 1–379 (MNITEGVVEL…ATIAEIRSAT (379 aa)). Arg-37, Arg-67, Asp-82, Asp-108, and Ala-109 together coordinate S-adenosyl-L-methionine. Zn(2+) is bound by residues Cys-247, Cys-250, Cys-267, and Cys-270.

This sequence belongs to the class I-like SAM-binding methyltransferase superfamily. Trm1 family.

It catalyses the reaction guanosine(26) in tRNA + 2 S-adenosyl-L-methionine = N(2)-dimethylguanosine(26) in tRNA + 2 S-adenosyl-L-homocysteine + 2 H(+). Functionally, dimethylates a single guanine residue at position 26 of a number of tRNAs using S-adenosyl-L-methionine as donor of the methyl groups. The protein is tRNA (guanine(26)-N(2))-dimethyltransferase of Haloquadratum walsbyi (strain DSM 16790 / HBSQ001).